Reading from the N-terminus, the 366-residue chain is Ribosomal RNA large subunit methyltransferase M (366 aa).

Residues serine 188, 221–224 (CPGG), aspartate 240, aspartate 260, and aspartate 277 each bind S-adenosyl-L-methionine. Catalysis depends on lysine 306, which acts as the Proton acceptor.

Belongs to the class I-like SAM-binding methyltransferase superfamily. RNA methyltransferase RlmE family. RlmM subfamily. As to quaternary structure, monomer.

The protein localises to the cytoplasm. The catalysed reaction is cytidine(2498) in 23S rRNA + S-adenosyl-L-methionine = 2'-O-methylcytidine(2498) in 23S rRNA + S-adenosyl-L-homocysteine + H(+). In terms of biological role, catalyzes the 2'-O-methylation at nucleotide C2498 in 23S rRNA. This is Ribosomal RNA large subunit methyltransferase M from Dickeya chrysanthemi (strain Ech1591) (Dickeya zeae (strain Ech1591)).